We begin with the raw amino-acid sequence, 333 residues long: Ornithine carbamoyltransferase (333 aa).

Carbamoyl phosphate is bound by residues 57 to 60, glutamine 83, arginine 107, and 134 to 137; these read STRT and HPTQ. L-ornithine is bound by residues asparagine 168, aspartate 232, and 236–237; that span reads SM. Carbamoyl phosphate-binding positions include 274–275 and arginine 319; that span reads CL.

The protein belongs to the aspartate/ornithine carbamoyltransferase superfamily. OTCase family.

It is found in the cytoplasm. The catalysed reaction is carbamoyl phosphate + L-ornithine = L-citrulline + phosphate + H(+). It participates in amino-acid biosynthesis; L-arginine biosynthesis; L-arginine from L-ornithine and carbamoyl phosphate: step 1/3. Functionally, reversibly catalyzes the transfer of the carbamoyl group from carbamoyl phosphate (CP) to the N(epsilon) atom of ornithine (ORN) to produce L-citrulline. The chain is Ornithine carbamoyltransferase from Photobacterium profundum (strain SS9).